A 392-amino-acid polypeptide reads, in one-letter code: Phospho-N-acetylmuramoyl-pentapeptide-transferase (392 aa).

10 consecutive transmembrane segments (helical) span residues 28 to 48, 76 to 96, 100 to 120, 137 to 157, 193 to 213, 225 to 245, 262 to 282, 289 to 309, 314 to 334, and 369 to 389; these read RALM…PFVI, TMGG…WFDL, FVWI…VDDW, YLWQ…SISE, ISYP…IVGS, GLAI…AYVT, SGEL…FLWF, VFMG…IAVI, IVLA…MLQV, and QVVV…LSTL.

It belongs to the glycosyltransferase 4 family. MraY subfamily. Mg(2+) serves as cofactor.

It is found in the cell inner membrane. It catalyses the reaction UDP-N-acetyl-alpha-D-muramoyl-L-alanyl-gamma-D-glutamyl-meso-2,6-diaminopimeloyl-D-alanyl-D-alanine + di-trans,octa-cis-undecaprenyl phosphate = di-trans,octa-cis-undecaprenyl diphospho-N-acetyl-alpha-D-muramoyl-L-alanyl-D-glutamyl-meso-2,6-diaminopimeloyl-D-alanyl-D-alanine + UMP. The protein operates within cell wall biogenesis; peptidoglycan biosynthesis. In terms of biological role, catalyzes the initial step of the lipid cycle reactions in the biosynthesis of the cell wall peptidoglycan: transfers peptidoglycan precursor phospho-MurNAc-pentapeptide from UDP-MurNAc-pentapeptide onto the lipid carrier undecaprenyl phosphate, yielding undecaprenyl-pyrophosphoryl-MurNAc-pentapeptide, known as lipid I. The polypeptide is Phospho-N-acetylmuramoyl-pentapeptide-transferase (Polaromonas naphthalenivorans (strain CJ2)).